Here is a 249-residue protein sequence, read N- to C-terminus: Cysteine-rich secretory protein 1 (249 aa).

A signal peptide spans 1–20 (MEIKHLLFLVAAACLLPVLS). The SCP domain maps to 45-175 (VNIHNTLRRG…SPRYFYVCHY (131 aa)). N-linked (GlcNAc...) asparagine glycosylation is present at N104. 5 cysteine pairs are disulfide-bonded: C195–C202, C198–C207, C211–C244, C220–C238, and C229–C242. One can recognise a ShKT domain in the interval 211–244 (CIYYDEYTDCSLEVRFLGCNHSTPRMFCKATCLC). N-linked (GlcNAc...) asparagine glycosylation is present at N230.

This sequence belongs to the CRISP family. In terms of tissue distribution, expressed in all the regions of the epididymis except the caput and is not detected in the testis, prostate, seminal vesicle, and brain.

Its function is as follows. May have a role in sperm-egg fusion and maturation. The chain is Cysteine-rich secretory protein 1 (CRISP1) from Macaca mulatta (Rhesus macaque).